Reading from the N-terminus, the 638-residue chain is Phosphomethylpyrimidine synthase (638 aa).

Substrate-binding positions include N236, M265, Y294, H330, 350-352, 391-394, and E430; these read SRG and DGLR. Zn(2+) is bound at residue H434. Position 457 (Y457) interacts with substrate. H498 lines the Zn(2+) pocket. [4Fe-4S] cluster-binding residues include C578, C581, and C586.

The protein belongs to the ThiC family. As to quaternary structure, homodimer. [4Fe-4S] cluster is required as a cofactor.

It catalyses the reaction 5-amino-1-(5-phospho-beta-D-ribosyl)imidazole + S-adenosyl-L-methionine = 4-amino-2-methyl-5-(phosphooxymethyl)pyrimidine + CO + 5'-deoxyadenosine + formate + L-methionine + 3 H(+). Its pathway is cofactor biosynthesis; thiamine diphosphate biosynthesis. In terms of biological role, catalyzes the synthesis of the hydroxymethylpyrimidine phosphate (HMP-P) moiety of thiamine from aminoimidazole ribotide (AIR) in a radical S-adenosyl-L-methionine (SAM)-dependent reaction. The polypeptide is Phosphomethylpyrimidine synthase (Polaromonas sp. (strain JS666 / ATCC BAA-500)).